Consider the following 504-residue polypeptide: Maturase K (504 aa).

The protein belongs to the intron maturase 2 family. MatK subfamily.

It localises to the plastid. The protein resides in the chloroplast. Its function is as follows. Usually encoded in the trnK tRNA gene intron. Probably assists in splicing its own and other chloroplast group II introns. The chain is Maturase K from Lepidium virginicum (Virginia pepperweed).